The primary structure comprises 201 residues: MKLLHLDASILPEDSSVSRTLSAAVVAHVRALQPDLTVTRRDLVAHPLSHMTLANLPPDHPASVPGNEVERAESQAVLEEFLTADIVVIGAPMYNFTIPTQLKSWLDRVLVPGRTFKYGPEGVKGLVEGKRVIVALSRGSFYGQETPYATAEHTETYLRTALGFIGIATPEVIVAEGVSRGEDQRAAAIEAAHQTVAALRV.

FMN-binding positions include Ser9, 16–18, and 93–96; these read SVS and MYNF.

It belongs to the azoreductase type 1 family. Homodimer. FMN serves as cofactor.

It catalyses the reaction 2 a quinone + NADH + H(+) = 2 a 1,4-benzosemiquinone + NAD(+). The enzyme catalyses N,N-dimethyl-1,4-phenylenediamine + anthranilate + 2 NAD(+) = 2-(4-dimethylaminophenyl)diazenylbenzoate + 2 NADH + 2 H(+). In terms of biological role, quinone reductase that provides resistance to thiol-specific stress caused by electrophilic quinones. Also exhibits azoreductase activity. Catalyzes the reductive cleavage of the azo bond in aromatic azo compounds to the corresponding amines. The polypeptide is FMN-dependent NADH:quinone oxidoreductase (Gluconacetobacter diazotrophicus (strain ATCC 49037 / DSM 5601 / CCUG 37298 / CIP 103539 / LMG 7603 / PAl5)).